Here is a 562-residue protein sequence, read N- to C-terminus: Formate--tetrahydrofolate ligase (562 aa).

Position 71 to 78 (71 to 78) interacts with ATP; the sequence is TPAGEGKS.

This sequence belongs to the formate--tetrahydrofolate ligase family.

The catalysed reaction is (6S)-5,6,7,8-tetrahydrofolate + formate + ATP = (6R)-10-formyltetrahydrofolate + ADP + phosphate. It functions in the pathway one-carbon metabolism; tetrahydrofolate interconversion. The chain is Formate--tetrahydrofolate ligase from Bacillus anthracis (strain A0248).